A 396-amino-acid chain; its full sequence is Pre-mRNA-splicing regulator WTAP (396 aa).

Met-1 carries the post-translational modification N-acetylmethionine. At Ser-14 the chain carries Phosphoserine. 3 stretches are compositionally biased toward low complexity: residues Gln-240–Ser-257, Ser-278–Gly-291, and Pro-304–Ser-316. Positions Gln-240–Leu-396 are disordered. Ser-305, Ser-306, and Ser-341 each carry phosphoserine. Residues Asp-340–Thr-356 show a composition bias toward polar residues. Thr-350 carries the post-translational modification Phosphothreonine. Basic and acidic residues predominate over residues Asp-357–Val-368. The segment covering His-380 to Leu-396 has biased composition (polar residues). A Phosphoserine modification is found at Ser-388.

Belongs to the fl(2)d family. In terms of assembly, component of the WMM complex, a N6-methyltransferase complex composed of a catalytic subcomplex, named MAC, and of an associated subcomplex, named MACOM. The MAC subcomplex is composed of METTL3 and METTL14. The MACOM subcomplex is composed of WTAP, ZC3H13, CBLL1/HAKAI, VIRMA, and, in some cases of RBM15 (RBM15 or RBM15B). Interacts with WT1. Also a component of a MACOM-like complex, named WTAP complex, composed of WTAP, ZC3H13, CBLL1, VIRMA, RBM15, BCLAF1 and THRAP3. Ubiquitously expressed.

The protein resides in the nucleus speckle. It is found in the nucleus. The protein localises to the nucleoplasm. Its subcellular location is the cytoplasm. Its function is as follows. Associated component of the WMM complex, a complex that mediates N6-methyladenosine (m6A) methylation of RNAs, a modification that plays a role in the efficiency of mRNA splicing and RNA processing. Required for accumulation of METTL3 and METTL14 to nuclear speckle. Acts as a mRNA splicing regulator. Regulates G2/M cell-cycle transition by binding to the 3' UTR of CCNA2, which enhances its stability. Impairs WT1 DNA-binding ability and inhibits expression of WT1 target genes. In Homo sapiens (Human), this protein is Pre-mRNA-splicing regulator WTAP.